A 585-amino-acid polypeptide reads, in one-letter code: Dihydroxy-acid dehydratase, mitochondrial (585 aa).

The transit peptide at 1–20 (MGLLTKVATSRQFSTTRCVA) directs the protein to the mitochondrion. C70 is a binding site for [2Fe-2S] cluster. D102 contacts Mg(2+). C143 provides a ligand contact to [2Fe-2S] cluster. Residue D144 participates in Mg(2+) binding. C221 contributes to the [2Fe-2S] cluster binding site. Residue E474 coordinates Mg(2+). S500 (proton acceptor) is an active-site residue.

This sequence belongs to the IlvD/Edd family. The cofactor is [2Fe-2S] cluster. Requires Mg(2+) as cofactor.

It is found in the mitochondrion. The enzyme catalyses (2R)-2,3-dihydroxy-3-methylbutanoate = 3-methyl-2-oxobutanoate + H2O. The catalysed reaction is (2R,3R)-2,3-dihydroxy-3-methylpentanoate = (S)-3-methyl-2-oxopentanoate + H2O. It functions in the pathway amino-acid biosynthesis; L-isoleucine biosynthesis; L-isoleucine from 2-oxobutanoate: step 3/4. Its pathway is amino-acid biosynthesis; L-valine biosynthesis; L-valine from pyruvate: step 3/4. Its activity is regulated as follows. Catalytic activity is inactivated under iron-limiting conditions. Its function is as follows. Dihydroxyacid dehydratase that catalyzes the third step in the common pathway leading to biosynthesis of branched-chain amino acids. Catalyzes the dehydration of (2R,3R)-2,3-dihydroxy-3-methylpentanoate (2,3-dihydroxy-3-methylvalerate) into 2-oxo-3-methylpentanoate (2-oxo-3-methylvalerate) and of (2R)-2,3-dihydroxy-3-methylbutanoate (2,3-dihydroxyisovalerate) into 2-oxo-3-methylbutanoate (2-oxoisovalerate), the penultimate precursor to L-isoleucine and L-valine, respectively. Required for the synthesis of alpha-isopropylmalate which modulates the activity of LEU3 and subsequently regulates the expression of LEU1. This chain is Dihydroxy-acid dehydratase, mitochondrial, found in Saccharomyces cerevisiae (strain ATCC 204508 / S288c) (Baker's yeast).